Here is a 1159-residue protein sequence, read N- to C-terminus: MAHRGPSRASKGPGPTARAPSPGAPPPPRSPRSRPLLLLLLLLGACGAAGRSPEPGRLGPHAQLTRVPRSPPAGRAEPGGGEDRQARGTEPGAPGPSPGPAPGPGEDGAPAAGYRRWERAAPLAGVASRAQVSLISTSFVLKGDATHNQAMVHWTGENSSVILILTKYYHADMGKVLESSLWRSSDFGTSYTKLTLQPGVTTVIDNFYICPTNKRKVILVSSSLSDRDQSLFLSADEGATFQKQPIPFFVETLIFHPKEEDKVLAYTKESKLYVSSDLGKKWTLLQERVTKDHVFWSVSGVDADPDLVHVEAQDLGGDFRYVTCAIHNCSEKMLTAPFAGPIDHGSLTVQDDYIFFKATSANQTKYYVSYRRNEFVLMKLPKYALPKDLQIISTDESQVFVAVQEWYQMDTYNLYQSDPRGVRYALVLQDVRSSRQAEESVLIDILEVRGVKGVFLANQKIDGKVMTLITYNKGRDWDYLRPPSMDMNGKPTNCKPPDCHLHLHLRWADNPYVSGTVHTKDTAPGLIMGAGNLGSQLVEYKEEMYITSDCGHTWRQVFEEEHHILYLDHGGVIVAIKDTSIPLKILKFSVDEGLTWSTHNFTSTSVFVDGLLSEPGDETLVMTVFGHISFRSDWELVKVDFRPSFSRQCGEEDYSSWELSNLQGDRCIMGQQRSFRKRKSTSWCIKGRSFTSALTSRVCECRDSDFLCDYGFERSSSSESSTNKCSANFWFNPLSPPDDCALGQTYTSSLGYRKVVSNVCEGGVDMQQSQVQLQCPLTPPRGLQVSIQGEAVAVRPGEDVLFVVRQEQGDVLTTKYQVDLGDGFKAMYVNLTLTGEPIRHRYESPGIYRVSVRAENTAGHDEAVLFVQVNSPLQALYLEVVPVIGLNQEVNLTAVLLPLNPNLTVFYWWIGHSLQPLLSLDNSVTTRFSDTGDVRVTVQAACGNSVLQDSRVLRVLDQFQVMPLQFSKELDAYNPNTPEWREDVGLVVTRLLSKETSVPQELLVTVVKPGLPTLADLYVLLPPPRPTRKRSLSSDKRLAAIQQVLNAQKISFLLRGGVRVLVALRDTGTGAEQLGGGGGYWAVVVLFVIGLFAAGAFILYKFKRKRPGRTVYAQMHNEKEQEMTSPVSHSEDVQGAVQGNHSGVVLSINSREMHSYLVS.

2 disordered regions span residues 1–36 and 48–111; these read MAHR…SRPL and AAGR…GAPA. Residues 1 to 50 form the signal peptide; it reads MAHRGPSRASKGPGPTARAPSPGAPPPPRSPRSRPLLLLLLLLGACGAAG. Residues 12–21 are compositionally biased toward low complexity; sequence GPGPTARAPS. The Extracellular segment spans residues 51-1078; sequence RSPEPGRLGP…TGAEQLGGGG (1028 aa). Positions 93-103 are enriched in pro residues; that stretch reads APGPSPGPAPG. Asparagine 158 carries N-linked (GlcNAc...) asparagine glycosylation. BNR repeat units lie at residues 182–193, 232–243, and 273–284; these read WRSSDFGTSYTK, FLSADEGATFQK, and YVSSDLGKKWTL. Cysteines 324 and 329 form a disulfide. N-linked (GlcNAc...) asparagine glycosylation is found at asparagine 328 and asparagine 362. One copy of the BNR 4 repeat lies at 468–479; sequence LITYNKGRDWDY. A disulfide bond links cysteine 494 and cysteine 499. BNR repeat units lie at residues 545–556 and 587–598; these read YITSDCGHTWRQ and KFSVDEGLTWST. A glycan (N-linked (GlcNAc...) asparagine) is linked at asparagine 600. Cystine bridges form between cysteine 649–cysteine 684, cysteine 667–cysteine 699, cysteine 701–cysteine 760, cysteine 708–cysteine 725, and cysteine 740–cysteine 775. Positions 786 to 876 constitute a PKD domain; that stretch reads SIQGEAVAVR…VQVNSPLQAL (91 aa). Asparagine 830, asparagine 891, and asparagine 902 each carry an N-linked (GlcNAc...) asparagine glycan. A helical transmembrane segment spans residues 1079–1099; sequence GYWAVVVLFVIGLFAAGAFIL. Residues 1100–1159 are Cytoplasmic-facing; the sequence is YKFKRKRPGRTVYAQMHNEKEQEMTSPVSHSEDVQGAVQGNHSGVVLSINSREMHSYLVS.

Belongs to the VPS10-related sortilin family. SORCS subfamily. As to quaternary structure, homodimer (in vitro). Heterodimer with NGFR. The extracellular domains of the heterodimer bind the precursor form of NGF (proNGF). Has much higher affinity for proNGF than for mature NGF. Can also bind mature NGF and BDNF. Each chain in the receptor dimer interacts (via extracellular domain) with an NGF dimer (in vitro). Interacts with the precursor forms of BDNF (proBDNF) and NTF3 (proNT3). The cytoplasmic region of the heterodimer formed by NGFR and SORCS2 binds TRIO. ProNGF binding mediates dissociation of TRIO from the receptor complex. Interacts with SLC1A1. Interacts with VPS35. Interacts (via extracellular domain) with NTRK2 (via extracellular domain). Interacts with VPS35. Interacts (via extracellular domain) with GRIN2A. In terms of processing, proteolytic cleavage removes a propeptide, giving rise to a 122 kDa chain that includes a cytoplasmic tail. Further cleavage gives rise to a 104 kDa chain that lacks the cytoplasmic tail, and a membrane-bound 18 kDa chain. The 104 kDa chain remains bound to the 18 kDa chain. Post-translationally, N-glycosylated. Detected on neurons in the caudate region. Detected on neurons in the hippocampus (at protein level). Highly expressed in brain and kidney. Detected at low levels in heart, liver, small intestine, skeletal muscle and thymus.

The protein resides in the cell membrane. Its subcellular location is the cell projection. It is found in the cytoplasmic vesicle membrane. The protein localises to the early endosome membrane. It localises to the recycling endosome membrane. The protein resides in the synapse. Its subcellular location is the synaptosome. It is found in the perikaryon. The protein localises to the dendrite. It localises to the dendritic spine. The protein resides in the postsynaptic density membrane. Its function is as follows. The heterodimer formed by NGFR and SORCS2 functions as receptor for the precursor forms of NGF (proNGF) and BDNF (proBDNF). ProNGF and proBDNF binding both promote axon growth cone collapse (in vitro). Plays a role in the regulation of dendritic spine density in hippocampus neurons. Required for normal neurite branching and extension in response to BDNF. Plays a role in BDNF-dependent hippocampal synaptic plasticity. Together with NGFR and NTRK2, is required both for BDNF-mediated synaptic long-term depression and long-term potentiation. ProNGF binding promotes dissociation of TRIO from the heterodimer, which leads to inactivation of RAC1 and/or RAC2 and subsequent reorganization of the actin cytoskeleton. Together with the retromer complex subunit VPS35, required for normal expression of GRIN2A at synapses and dendritic cell membranes. Required for normal expression of the amino acid transporter SLC1A1 at the cell membrane, and thereby contributes to protect cells against oxidative stress. Does not promote Schwann cell apoptosis in response to proBDNF. In terms of biological role, sorCS2 104 kDa chain and SorCS2 18 kDa chain together promote Schwann cell apoptosis in response to proBDNF. The sequence is that of VPS10 domain-containing receptor SorCS2 (SORCS2) from Homo sapiens (Human).